A 131-amino-acid chain; its full sequence is Transcription antitermination protein NusB (131 aa).

It belongs to the NusB family.

Functionally, involved in transcription antitermination. Required for transcription of ribosomal RNA (rRNA) genes. Binds specifically to the boxA antiterminator sequence of the ribosomal RNA (rrn) operons. The sequence is that of Transcription antitermination protein NusB from Campylobacter fetus subsp. fetus (strain 82-40).